We begin with the raw amino-acid sequence, 503 residues long: ATP synthase subunit alpha (503 aa).

Position 170–177 (G170–T177) interacts with ATP.

It belongs to the ATPase alpha/beta chains family. F-type ATPases have 2 components, CF(1) - the catalytic core - and CF(0) - the membrane proton channel. CF(1) has five subunits: alpha(3), beta(3), gamma(1), delta(1), epsilon(1). CF(0) has four main subunits: a, b, b' and c.

The protein resides in the cellular thylakoid membrane. It catalyses the reaction ATP + H2O + 4 H(+)(in) = ADP + phosphate + 5 H(+)(out). In terms of biological role, produces ATP from ADP in the presence of a proton gradient across the membrane. The alpha chain is a regulatory subunit. This chain is ATP synthase subunit alpha, found in Rippkaea orientalis (strain PCC 8801 / RF-1) (Cyanothece sp. (strain PCC 8801)).